The chain runs to 395 residues: Acetate kinase (395 aa).

Position 10 (N10) interacts with Mg(2+). Residue K17 participates in ATP binding. Substrate is bound at residue R87. D144 functions as the Proton donor/acceptor in the catalytic mechanism. ATP is bound by residues H204–G208, D279–R281, and G327–N331. E381 provides a ligand contact to Mg(2+).

Belongs to the acetokinase family. Homodimer. The cofactor is Mg(2+). Requires Mn(2+) as cofactor.

Its subcellular location is the cytoplasm. The enzyme catalyses acetate + ATP = acetyl phosphate + ADP. It participates in metabolic intermediate biosynthesis; acetyl-CoA biosynthesis; acetyl-CoA from acetate: step 1/2. Functionally, catalyzes the formation of acetyl phosphate from acetate and ATP. Can also catalyze the reverse reaction. This Stutzerimonas stutzeri (strain A1501) (Pseudomonas stutzeri) protein is Acetate kinase.